Here is a 256-residue protein sequence, read N- to C-terminus: Small ribosomal subunit protein uS2 (256 aa).

It belongs to the universal ribosomal protein uS2 family.

The polypeptide is Small ribosomal subunit protein uS2 (Ruegeria sp. (strain TM1040) (Silicibacter sp.)).